The sequence spans 216 residues: Pyridoxine/pyridoxamine 5'-phosphate oxidase (216 aa).

Substrate is bound by residues 9 to 12 and Arg-67; that span reads RLSY. Residues 62 to 67, 77 to 78, Lys-84, and Gln-106 each bind FMN; these read RIVLLR and YT. Substrate-binding residues include Tyr-124, Arg-128, and Ser-132. FMN is bound by residues 142-143 and Trp-188; that span reads QS. 194 to 196 provides a ligand contact to substrate; that stretch reads RMH. Arg-198 is an FMN binding site.

Belongs to the pyridoxamine 5'-phosphate oxidase family. Homodimer. FMN is required as a cofactor.

It carries out the reaction pyridoxamine 5'-phosphate + O2 + H2O = pyridoxal 5'-phosphate + H2O2 + NH4(+). It catalyses the reaction pyridoxine 5'-phosphate + O2 = pyridoxal 5'-phosphate + H2O2. It participates in cofactor metabolism; pyridoxal 5'-phosphate salvage; pyridoxal 5'-phosphate from pyridoxamine 5'-phosphate: step 1/1. It functions in the pathway cofactor metabolism; pyridoxal 5'-phosphate salvage; pyridoxal 5'-phosphate from pyridoxine 5'-phosphate: step 1/1. Functionally, catalyzes the oxidation of either pyridoxine 5'-phosphate (PNP) or pyridoxamine 5'-phosphate (PMP) into pyridoxal 5'-phosphate (PLP). The chain is Pyridoxine/pyridoxamine 5'-phosphate oxidase from Psychrobacter cryohalolentis (strain ATCC BAA-1226 / DSM 17306 / VKM B-2378 / K5).